The chain runs to 618 residues: Sodium-coupled monocarboxylate transporter 2 (618 aa).

At 1–9 the chain is on the extracellular side; that stretch reads MEVKNFAVW. Residues 10–30 traverse the membrane as a helical segment; the sequence is DYVVFAALFFISSGIGVFFAI. The Cytoplasmic segment spans residues 31 to 47; it reads KERKKATSREFLVGGRQ. The helical transmembrane segment at 48 to 68 threads the bilayer; sequence MSFGPVGLSLTASFMSAVTVL. Residues 69-82 are Extracellular-facing; that stretch reads GTPSEVYRFGASFL. The helical transmembrane segment at 83–103 threads the bilayer; that stretch reads VFFIAYLFVILLTSELFLPVF. At 104–128 the chain is on the cytoplasmic side; that stretch reads YRSGITSTYEYLQLRFNKPVRYAAT. The helical transmembrane segment at 129–149 threads the bilayer; it reads VIYIVQTILYTGVVVYAPALA. Over 150 to 157 the chain is Extracellular; sequence LNQVTGFD. The helical transmembrane segment at 158 to 178 threads the bilayer; that stretch reads LWGSVFATGIVCTFYCTLGGL. At 179 to 180 the chain is on the cytoplasmic side; the sequence is KA. A helical transmembrane segment spans residues 181 to 201; that stretch reads VVWTDAFQMVVMIVGFLTVLI. Over 202 to 235 the chain is Extracellular; it reads QGSTHAGGFHNVLEQSTNGSRLHIFDFDVDPLRR. The chain crosses the membrane as a helical span at residues 236 to 256; that stretch reads HTFWTITVGGTFTWLGIYGVN. Topologically, residues 257-275 are cytoplasmic; it reads QSTIQRCISCKTEKHAKLA. A helical membrane pass occupies residues 276–296; it reads LYFNLLGLWIILVCAVFSGLI. At 297 to 321 the chain is on the extracellular side; it reads MYSHFKDCDPWTSGIISAPDQLMPY. A helical transmembrane segment spans residues 322-342; that stretch reads FVMEIFATMPGLPGLFVACAF. Residues 343–385 lie on the Cytoplasmic side of the membrane; sequence SGTLSTVASSINALATVTFEDFVKSCFPHLSDKLSTWISKGLC. The helical transmembrane segment at 386–406 threads the bilayer; it reads LLFGVMCTSMAVAASVMGGVV. Residues 407–411 are Extracellular-facing; that stretch reads QASLS. A helical transmembrane segment spans residues 412 to 432; sequence IHGMCGGPMLGLFSLGIVFPF. The Cytoplasmic segment spans residues 433–437; sequence VNWKG. The helical transmembrane segment at 438 to 458 threads the bilayer; the sequence is ALGGLLTGITLSFWVAIGAFI. Over 459–504 the chain is Extracellular; that stretch reads YPAPASKTWPLPLSTDQCIKSNVTATGPPVLSSRPGIADTWYSISY. Asparagine 480 is a glycosylation site (N-linked (GlcNAc...) asparagine). The helical transmembrane segment at 505-525 threads the bilayer; the sequence is LYYSAVGCLGCIVAGVIISLI. Residues 526-618 lie on the Cytoplasmic side of the membrane; that stretch reads TGRQRGEDIQ…NNMAFETTHF (93 aa).

The protein belongs to the sodium:solute symporter (SSF) (TC 2.A.21) family.

Its subcellular location is the apical cell membrane. It carries out the reaction (S)-lactate(out) + Na(+)(out) = (S)-lactate(in) + Na(+)(in). The catalysed reaction is nicotinate(out) + Na(+)(out) = nicotinate(in) + Na(+)(in). The enzyme catalyses pyruvate(out) + Na(+)(out) = pyruvate(in) + Na(+)(in). It catalyses the reaction propanoate(out) + Na(+)(out) = propanoate(in) + Na(+)(in). It carries out the reaction butanoate(out) + Na(+)(out) = butanoate(in) + Na(+)(in). The catalysed reaction is acetoacetate(out) + Na(+)(out) = acetoacetate(in) + Na(+)(in). Its activity is regulated as follows. Cotransport of monocarboxylates and nicotinate strongly inhibited by ibuprofen, fenoprofen and ketoprofen. Functionally, acts as an electroneutral and low-affinity sodium (Na(+))-dependent sodium-coupled solute transporter. Catalyzes the transport across the plasma membrane of many monocarboxylates such as lactate, pyruvate, nicotinate, propionate, butyrate and beta-D-hydroxybutyrate. May be responsible for the first step of reabsorption of monocarboxylates from the lumen of the proximal tubule of the kidney and the small intestine. May play also a role in monocarboxylates transport in the retina. The sequence is that of Sodium-coupled monocarboxylate transporter 2 from Homo sapiens (Human).